A 214-amino-acid polypeptide reads, in one-letter code: ATP phosphoribosyltransferase (214 aa).

Belongs to the ATP phosphoribosyltransferase family. Short subfamily. In terms of assembly, heteromultimer composed of HisG and HisZ subunits.

It is found in the cytoplasm. The enzyme catalyses 1-(5-phospho-beta-D-ribosyl)-ATP + diphosphate = 5-phospho-alpha-D-ribose 1-diphosphate + ATP. The protein operates within amino-acid biosynthesis; L-histidine biosynthesis; L-histidine from 5-phospho-alpha-D-ribose 1-diphosphate: step 1/9. In terms of biological role, catalyzes the condensation of ATP and 5-phosphoribose 1-diphosphate to form N'-(5'-phosphoribosyl)-ATP (PR-ATP). Has a crucial role in the pathway because the rate of histidine biosynthesis seems to be controlled primarily by regulation of HisG enzymatic activity. This is ATP phosphoribosyltransferase from Streptococcus gordonii (strain Challis / ATCC 35105 / BCRC 15272 / CH1 / DL1 / V288).